A 605-amino-acid chain; its full sequence is E3 ubiquitin-protein ligase synoviolin A (605 aa).

The helical transmembrane segment at 1–19 (MTGASLALTAAVVAHAYYL) threads the bilayer. Topologically, residues 20 to 35 (KNQFYPTVVYLTKSSP) are lumenal. A helical membrane pass occupies residues 36-56 (SMAVLYIQAFVLVFLLGKFMG). Residues 57–92 (KVFFGQLRAAEMEHLLERSWYAVTETCLAFTVFRDD) lie on the Cytoplasmic side of the membrane. The helical transmembrane segment at 93–113 (FSPRFVALFTLLLFLKCFHWL) threads the bilayer. The Lumenal segment spans residues 114 to 129 (AEDRVDFMERSPNISW). The chain crosses the membrane as a helical span at residues 130 to 150 (LFHFRILALMLLLGVLDAFFV). Residues 151–163 (SHAYHSLVIRGAS) are Cytoplasmic-facing. Residues 164-184 (VQLVFGFEYAILMTVILTVFI) traverse the membrane as a helical segment. Over 185–218 (KYILHSVDLQSENPWDNKAVYMLYTELFTGFIKV) the chain is Lumenal. A helical transmembrane segment spans residues 219–239 (LLYVAFMTIMVKVHTFPLFAI). Residues 230–264 (KVHTFPLFAIRPMYLAMRQFKKAVTDAIMSRRAIR) are interaction with p53/TP53. Residues 240–605 (RPMYLAMRQF…KLETGTTDSQ (366 aa)) are Cytoplasmic-facing. The Zn(2+) site is built by C285, C288, C301, H303, H306, C309, C320, and C323. The segment at 285-324 (CIICREEMVTGAKRLPCNHIFHTSCLRSWFQRQQTCPTCR) adopts an RING-type; atypical zinc-finger fold. The segment covering 334–355 (TQPQTPTEQQNQHQNQAQQQPT) has biased composition (low complexity). Positions 334–433 (TQPQTPTEQQ…QPGAALPGFP (100 aa)) are disordered. A compositionally biased stretch (pro residues) spans 356–391 (PVIPPQPNFPPGILPPFPPGMFPLWPPMGPFPPVPG). Residues 403 to 414 (PGSSSGSSPRPG) show a composition bias toward low complexity. Residues 415-424 (ETSNVGSESQ) show a composition bias toward polar residues. Residues 465 to 496 (EELRAMEGHERQNLEARLQCLQNIHTLLDAAM) adopt a coiled-coil conformation. The disordered stretch occupies residues 513–605 (QPPISSTSTS…KLETGTTDSQ (93 aa)). Residues 516–539 (ISSTSTSTSSAASASTAPTTSNIS) are compositionally biased toward low complexity. A compositionally biased stretch (polar residues) spans 546 to 555 (DTTSTVTNTE). A compositionally biased stretch (low complexity) spans 556–579 (SSQQSAPPAPVSVETLSGAEGGET).

The protein belongs to the HRD1 family. In terms of assembly, homodimer.

The protein localises to the endoplasmic reticulum membrane. The catalysed reaction is S-ubiquitinyl-[E2 ubiquitin-conjugating enzyme]-L-cysteine + [acceptor protein]-L-lysine = [E2 ubiquitin-conjugating enzyme]-L-cysteine + N(6)-ubiquitinyl-[acceptor protein]-L-lysine.. Its pathway is protein modification; protein ubiquitination. Its function is as follows. E3 ubiquitin-protein ligase which accepts ubiquitin specifically from endoplasmic reticulum-associated UBC7 E2 ligase and transfers it to substrates, promoting their degradation. Component of the endoplasmic reticulum quality control (ERQC) system also called ER-associated degradation (ERAD) involved in ubiquitin-dependent degradation of misfolded endoplasmic reticulum proteins. Also promotes the degradation of normal but naturally short-lived proteins. Protects cells from ER stress-induced apoptosis. Sequesters p53 in the cytoplasm and promotes its degradation, thereby negatively regulating its biological function in transcription, cell cycle regulation and apoptosis. The chain is E3 ubiquitin-protein ligase synoviolin A (syvn1-a) from Xenopus laevis (African clawed frog).